An 81-amino-acid polypeptide reads, in one-letter code: Small ribosomal subunit protein bS16 (81 aa).

The protein belongs to the bacterial ribosomal protein bS16 family.

This is Small ribosomal subunit protein bS16 from Clostridium botulinum (strain Eklund 17B / Type B).